The primary structure comprises 292 residues: Malonyl-[acyl-carrier protein] O-methyltransferase (292 aa).

This sequence belongs to the methyltransferase superfamily.

The enzyme catalyses malonyl-[ACP] + S-adenosyl-L-methionine = malonyl-[ACP] methyl ester + S-adenosyl-L-homocysteine. It functions in the pathway cofactor biosynthesis; biotin biosynthesis. Its function is as follows. Converts the free carboxyl group of a malonyl-thioester to its methyl ester by transfer of a methyl group from S-adenosyl-L-methionine (SAM). It allows to synthesize pimeloyl-ACP via the fatty acid synthetic pathway. This chain is Malonyl-[acyl-carrier protein] O-methyltransferase, found in Alcanivorax borkumensis (strain ATCC 700651 / DSM 11573 / NCIMB 13689 / SK2).